The sequence spans 299 residues: Mycothiol acetyltransferase (299 aa).

2 consecutive N-acetyltransferase domains span residues 1-156 (MGWT…TYRG) and 149-299 (VTMR…ARAL). Glutamate 33 is a binding site for 1D-myo-inositol 2-(L-cysteinylamino)-2-deoxy-alpha-D-glucopyranoside. Acetyl-CoA contacts are provided by residues 75 to 77 (LVV) and 83 to 88 (RRGIGT). 1D-myo-inositol 2-(L-cysteinylamino)-2-deoxy-alpha-D-glucopyranoside is bound by residues glutamate 176, lysine 218, and glutamate 231. Acetyl-CoA is bound by residues 235–237 (VGI) and 242–248 (QGRGLGR). Tyrosine 269 provides a ligand contact to 1D-myo-inositol 2-(L-cysteinylamino)-2-deoxy-alpha-D-glucopyranoside. Residue 274 to 279 (NTAALH) participates in acetyl-CoA binding.

This sequence belongs to the acetyltransferase family. MshD subfamily. Monomer.

It catalyses the reaction 1D-myo-inositol 2-(L-cysteinylamino)-2-deoxy-alpha-D-glucopyranoside + acetyl-CoA = mycothiol + CoA + H(+). Catalyzes the transfer of acetyl from acetyl-CoA to desacetylmycothiol (Cys-GlcN-Ins) to form mycothiol. This Rhodococcus erythropolis (strain PR4 / NBRC 100887) protein is Mycothiol acetyltransferase.